The primary structure comprises 244 residues: Ethylene-responsive transcription factor 1 (244 aa).

The AP2/ERF DNA-binding region spans 106–164 (HYRGVRQRPWGKFAAEIRDPAKNGARVWLGTYESAEEAALAYGKAAFRMRGTKALLNFP). The span at 186-198 (SASSSVSSASESG) shows a compositional bias: low complexity. The tract at residues 186-214 (SASSSVSSASESGSPKRRRKGVAAKQAEL) is disordered.

This sequence belongs to the ethylene-response factor family. Class 1 subfamily. As to expression, present in stems.

The protein localises to the nucleus. Involved in the regulation of gene expression during fruit ripening, by stress factors and by components of stress signal transduction pathways. Transcription factor that binds to the GCC-box pathogenesis-related promoter element. Probably acts as a transcriptional activator and may be involved in disease resistance pathways. The protein is Ethylene-responsive transcription factor 1 (ERF1) of Solanum lycopersicum (Tomato).